The chain runs to 361 residues: Queuine tRNA-ribosyltransferase (361 aa).

D92 (proton acceptor) is an active-site residue. Substrate is bound by residues 92–96 (DSGGF), D146, Q189, and G216. The interval 247-253 (GVGKPVD) is RNA binding. D266 serves as the catalytic Nucleophile. The interval 271–275 (TRSGR) is RNA binding; important for wobble base 34 recognition. C304, C306, C309, and H335 together coordinate Zn(2+).

Belongs to the queuine tRNA-ribosyltransferase family. In terms of assembly, homodimer. Within each dimer, one monomer is responsible for RNA recognition and catalysis, while the other monomer binds to the replacement base PreQ1. Zn(2+) serves as cofactor.

It carries out the reaction 7-aminomethyl-7-carbaguanine + guanosine(34) in tRNA = 7-aminomethyl-7-carbaguanosine(34) in tRNA + guanine. It functions in the pathway tRNA modification; tRNA-queuosine biosynthesis. In terms of biological role, catalyzes the base-exchange of a guanine (G) residue with the queuine precursor 7-aminomethyl-7-deazaguanine (PreQ1) at position 34 (anticodon wobble position) in tRNAs with GU(N) anticodons (tRNA-Asp, -Asn, -His and -Tyr). Catalysis occurs through a double-displacement mechanism. The nucleophile active site attacks the C1' of nucleotide 34 to detach the guanine base from the RNA, forming a covalent enzyme-RNA intermediate. The proton acceptor active site deprotonates the incoming PreQ1, allowing a nucleophilic attack on the C1' of the ribose to form the product. After dissociation, two additional enzymatic reactions on the tRNA convert PreQ1 to queuine (Q), resulting in the hypermodified nucleoside queuosine (7-(((4,5-cis-dihydroxy-2-cyclopenten-1-yl)amino)methyl)-7-deazaguanosine). This is Queuine tRNA-ribosyltransferase from Rickettsia africae (strain ESF-5).